A 337-amino-acid polypeptide reads, in one-letter code: tRNA N6-adenosine threonylcarbamoyltransferase (337 aa).

Positions 114 and 118 each coordinate Fe cation. Substrate contacts are provided by residues 136-140 (LVSGG), aspartate 169, glycine 182, aspartate 186, and asparagine 275. Residue aspartate 301 participates in Fe cation binding.

It belongs to the KAE1 / TsaD family. Requires Fe(2+) as cofactor.

The protein resides in the cytoplasm. It catalyses the reaction L-threonylcarbamoyladenylate + adenosine(37) in tRNA = N(6)-L-threonylcarbamoyladenosine(37) in tRNA + AMP + H(+). Required for the formation of a threonylcarbamoyl group on adenosine at position 37 (t(6)A37) in tRNAs that read codons beginning with adenine. Is involved in the transfer of the threonylcarbamoyl moiety of threonylcarbamoyl-AMP (TC-AMP) to the N6 group of A37, together with TsaE and TsaB. TsaD likely plays a direct catalytic role in this reaction. The protein is tRNA N6-adenosine threonylcarbamoyltransferase of Streptococcus thermophilus (strain ATCC BAA-491 / LMD-9).